The sequence spans 468 residues: ATP synthase subunit beta (468 aa).

Position 155-162 (155-162 (GGAGVGKT)) interacts with ATP.

The protein belongs to the ATPase alpha/beta chains family. As to quaternary structure, F-type ATPases have 2 components, CF(1) - the catalytic core - and CF(0) - the membrane proton channel. CF(1) has five subunits: alpha(3), beta(3), gamma(1), delta(1), epsilon(1). CF(0) has three main subunits: a(1), b(2) and c(9-12). The alpha and beta chains form an alternating ring which encloses part of the gamma chain. CF(1) is attached to CF(0) by a central stalk formed by the gamma and epsilon chains, while a peripheral stalk is formed by the delta and b chains.

It localises to the cell membrane. The enzyme catalyses ATP + H2O + 4 H(+)(in) = ADP + phosphate + 5 H(+)(out). Its function is as follows. Produces ATP from ADP in the presence of a proton gradient across the membrane. The catalytic sites are hosted primarily by the beta subunits. The protein is ATP synthase subunit beta of Streptococcus pyogenes serotype M49 (strain NZ131).